Reading from the N-terminus, the 876-residue chain is Probable inactive ATP-dependent zinc metalloprotease FTSHI 2, chloroplastic (876 aa).

A disordered region spans residues Met-1–Asn-20. Residues Met-1 to Ser-32 constitute a chloroplast transit peptide. A compositionally biased stretch (polar residues) spans His-8–Glu-19. The chain crosses the membrane as a helical span at residues Leu-59–Ala-79. Residues Thr-256–Lys-276 form a disordered region. The segment covering Lys-258–Lys-275 has biased composition (basic residues). A helical transmembrane segment spans residues Val-304–Tyr-324. The interval Glu-350–Gly-370 is disordered. A compositionally biased stretch (acidic residues) spans Gly-357–Gly-368. Gly-450–Thr-457 contributes to the ATP binding site.

It in the N-terminal section; belongs to the AAA ATPase family. This sequence in the C-terminal section; belongs to the peptidase M41 family. As to quaternary structure, homooligomer. Interacts with FtsHi4.

Its subcellular location is the plastid. The protein localises to the chloroplast membrane. Required for plastid development during embryogenesis. Might be involved in chaperone functions or play a structural role in the thylakoid FtsH complex. This Arabidopsis thaliana (Mouse-ear cress) protein is Probable inactive ATP-dependent zinc metalloprotease FTSHI 2, chloroplastic.